Reading from the N-terminus, the 370-residue chain is Sphingolipid delta(4)-desaturase (370 aa).

3 helical membrane-spanning segments follow: residues 68 to 88 (VMGVVLLQLGIAYYLRHTPVF), 92 to 112 (FLTLAYVIGATANQAIFLAIH), and 128 to 148 (LFAVFANIPIGVPYSASFQPY). The Histidine box-1 motif lies at 112-116 (HELSH). The Histidine box-2 signature appears at 149-153 (HQLHH). 3 consecutive transmembrane segments (helical) span residues 173–193 (FLSSMPGKLFFAIFQIFFYAL), 197–217 (FITQIKFTYVHLVNVVFQLIF), and 220–240 (VMVTCWGWKALGYFIVSTFLA). The Histidine box-3 signature appears at 299 to 303 (HNEHH).

This sequence belongs to the fatty acid desaturase type 1 family. DEGS subfamily.

Its subcellular location is the membrane. The enzyme catalyses an N-acylsphinganine + 2 Fe(II)-[cytochrome b5] + O2 + 2 H(+) = an N-acylsphing-4-enine + 2 Fe(III)-[cytochrome b5] + 2 H2O. It functions in the pathway lipid metabolism; sphingolipid metabolism. In terms of biological role, delta(4)-fatty-acid desaturase which introduces a double bond at the 4-position in the long-chain base (LCB) of ceramides. Required for the formation of the monounsaturated sphingoid base (E)-sphing-4-enine during glucosylceramide (GluCer) biosynthesis. This Candida albicans (strain SC5314 / ATCC MYA-2876) (Yeast) protein is Sphingolipid delta(4)-desaturase.